A 404-amino-acid polypeptide reads, in one-letter code: Argininosuccinate synthase (404 aa).

ATP-binding positions include 12–20 (AYSGGLDTS) and Ala-39. Residues Tyr-91 and Ser-96 each coordinate L-citrulline. Gly-121 lines the ATP pocket. Residues Thr-123, Asn-127, and Asp-128 each coordinate L-aspartate. Position 127 (Asn-127) interacts with L-citrulline. Residues Arg-131, Ser-180, Ser-189, Glu-265, and Tyr-277 each contribute to the L-citrulline site.

The protein belongs to the argininosuccinate synthase family. Type 1 subfamily. Homotetramer.

The protein localises to the cytoplasm. The enzyme catalyses L-citrulline + L-aspartate + ATP = 2-(N(omega)-L-arginino)succinate + AMP + diphosphate + H(+). The protein operates within amino-acid biosynthesis; L-arginine biosynthesis; L-arginine from L-ornithine and carbamoyl phosphate: step 2/3. The protein is Argininosuccinate synthase of Vibrio campbellii (strain ATCC BAA-1116).